The following is a 182-amino-acid chain: MPLLNSLATPYAEALLQVTEARGESETVADQCKQLLAIWNDSEDFRDAMVSPVLEPDAKKQALKALVGEDVTPSVFNLLKVLADRQRLIAFDAVMLRYLELYREQQGITLAQVRSAQSLTEDQQAALSKKVQAMAGTNKVDIDLSVDPSLIGGFVVSLGSQVIDASLSGQVRRLGLALAKAS.

The protein belongs to the ATPase delta chain family. In terms of assembly, F-type ATPases have 2 components, F(1) - the catalytic core - and F(0) - the membrane proton channel. F(1) has five subunits: alpha(3), beta(3), gamma(1), delta(1), epsilon(1). CF(0) has four main subunits: a(1), b(1), b'(1) and c(10-14). The alpha and beta chains form an alternating ring which encloses part of the gamma chain. F(1) is attached to F(0) by a central stalk formed by the gamma and epsilon chains, while a peripheral stalk is formed by the delta, b and b' chains.

Its subcellular location is the cellular thylakoid membrane. Functionally, f(1)F(0) ATP synthase produces ATP from ADP in the presence of a proton or sodium gradient. F-type ATPases consist of two structural domains, F(1) containing the extramembraneous catalytic core and F(0) containing the membrane proton channel, linked together by a central stalk and a peripheral stalk. During catalysis, ATP synthesis in the catalytic domain of F(1) is coupled via a rotary mechanism of the central stalk subunits to proton translocation. Its function is as follows. This protein is part of the stalk that links CF(0) to CF(1). It either transmits conformational changes from CF(0) to CF(1) or is implicated in proton conduction. This is ATP synthase subunit delta from Synechococcus sp. (strain CC9605).